Consider the following 373-residue polypeptide: PqqA peptide cyclase (373 aa).

The Radical SAM core domain occupies I7–D227. The [4Fe-4S] cluster site is built by C21, C25, and C28.

This sequence belongs to the radical SAM superfamily. PqqE family. In terms of assembly, interacts with PqqD. The interaction is necessary for activity of PqqE. It depends on [4Fe-4S] cluster as a cofactor.

It carries out the reaction [PQQ precursor protein] + S-adenosyl-L-methionine = E-Y cross-linked-[PQQ precursor protein] + 5'-deoxyadenosine + L-methionine + H(+). It functions in the pathway cofactor biosynthesis; pyrroloquinoline quinone biosynthesis. Catalyzes the cross-linking of a glutamate residue and a tyrosine residue in the PqqA protein as part of the biosynthesis of pyrroloquinoline quinone (PQQ). This is PqqA peptide cyclase from Methylocella silvestris (strain DSM 15510 / CIP 108128 / LMG 27833 / NCIMB 13906 / BL2).